The chain runs to 298 residues: MPEQRLRIAIQKKGRLSEDTVKLLKACGVKVNLNTQRLIAHSDNMAIDILRVRDDDIPGLIMDGVVDLGFIGQNVLEEENMMRTVAKEPTAHKVVKELAFGACRFSIAVDQDFDYQGAKSLANLRIATTYVHILKRFMEEQNIPYTSCMLTGSVEVAPRAGLADAICDLVSTGATLEANGLKEVEVIYRSTAVLIQRADPLNQQKQDLVNRLLTRIDGVQSAKECKYIMLHAPTANLEAIKSLLPGSEQPTVMQLSGSSDHVALHVVSKENLFWETMEQLKTLGASSILVLPIEKMME.

It belongs to the ATP phosphoribosyltransferase family. Long subfamily. Mg(2+) serves as cofactor.

It is found in the cytoplasm. It catalyses the reaction 1-(5-phospho-beta-D-ribosyl)-ATP + diphosphate = 5-phospho-alpha-D-ribose 1-diphosphate + ATP. Its pathway is amino-acid biosynthesis; L-histidine biosynthesis; L-histidine from 5-phospho-alpha-D-ribose 1-diphosphate: step 1/9. With respect to regulation, feedback inhibited by histidine. Catalyzes the condensation of ATP and 5-phosphoribose 1-diphosphate to form N'-(5'-phosphoribosyl)-ATP (PR-ATP). Has a crucial role in the pathway because the rate of histidine biosynthesis seems to be controlled primarily by regulation of HisG enzymatic activity. This is ATP phosphoribosyltransferase from Psychromonas ingrahamii (strain DSM 17664 / CCUG 51855 / 37).